A 263-amino-acid chain; its full sequence is uncharacterized protein (263 aa).

This sequence to B.subtilis soj.

This is an uncharacterized protein from Pseudomonas putida (strain ATCC 47054 / DSM 6125 / CFBP 8728 / NCIMB 11950 / KT2440).